The sequence spans 1238 residues: Virulence sensor protein BvgS (1238 aa).

An N-terminal signal peptide occupies residues 1 to 32; sequence MPAPHRLYPRSLICLAQALLVWALLAWAPAQA. Over 33 to 307 the chain is Cytoplasmic; sequence SQELTLVGKA…REQQWMANHP (275 aa). The helical transmembrane segment at 308-331 threads the bilayer; it reads VVKVAVLNLFAPFTLFRTDEQFGG. At 332 to 541 the chain is on the periplasmic side; that stretch reads ISAAVLQLLQ…PRTWYAYRNE (210 aa). A helical transmembrane segment spans residues 542 to 563; it reads IYLLIGLGLLSALLFLSWIVYL. Residues 564 to 1238 lie on the Cytoplasmic side of the membrane; it reads RRQIRQRKRA…LEQRPHQGQP (675 aa). A PAS domain is found at 580 to 651; it reads QLEFMRVLID…MHEFLLTRMA (72 aa). In terms of domain architecture, PAC spans 652–708; it reads AEREPRFEDRDVTLHGRTRHVYQWTVPYGDSLGELKGIIGGWIDITERAELLRELHD. The 223-residue stretch at 726–948 folds into the Histidine kinase domain; that stretch reads TMSHEIRTPM…TVSVDLRLTM (223 aa). Phosphohistidine; by autocatalysis is present on His729. The region spanning 974–1095 is the Response regulatory domain; that stretch reads RVLVVDDHKP…ALRQRLNEAA (122 aa). Residue Asp1023 is modified to 4-aspartylphosphate. The HPt domain maps to 1133 to 1228; it reads DEALIRQLLE…AALETQLRAW (96 aa). At His1172 the chain carries Phosphohistidine.

Post-translationally, activation requires a sequential transfer of a phosphate group from a His in the primary transmitter domain, to an Asp in the receiver domain and to a His in the secondary transmitter domain.

It localises to the cell inner membrane. It carries out the reaction ATP + protein L-histidine = ADP + protein N-phospho-L-histidine.. Functionally, member of the two-component regulatory system BvgS/BvgA. Phosphorylates BvgA via a four-step phosphorelay in response to environmental signals. The chain is Virulence sensor protein BvgS (bvgS) from Bordetella parapertussis (strain 12822 / ATCC BAA-587 / NCTC 13253).